The sequence spans 1134 residues: Tetrathionate reductase subunit A (1134 aa).

The tat-type signal signal peptide spans 1–31; the sequence is MQLSRRDFIKGLVAVGSASVFLAGYSETVDR. Positions 46-133 constitute a 4Fe-4S Mo/W bis-MGD-type domain; it reads GRIVHSACLG…DGIHYLYDPY (88 aa). Cysteine 53, cysteine 56, cysteine 60, and cysteine 119 together coordinate [4Fe-4S] cluster.

Belongs to the prokaryotic molybdopterin-containing oxidoreductase family. In terms of assembly, probably composed of three subunits: TtrA, TtrB and TtrC. Precursor interacts with TtrD. [4Fe-4S] cluster serves as cofactor. Mo-bis(molybdopterin guanine dinucleotide) is required as a cofactor. In terms of processing, exported by the Tat system. The position of the signal peptide cleavage has not been experimentally proven.

Its subcellular location is the cell membrane. In terms of biological role, part of a membrane-bound tetrathionate reductase that catalyzes the reduction of tetrathionate to thiosulfate. TtrA is the catalytic subunit. The sequence is that of Tetrathionate reductase subunit A (ttrA) from Archaeoglobus fulgidus (strain ATCC 49558 / DSM 4304 / JCM 9628 / NBRC 100126 / VC-16).